Reading from the N-terminus, the 151-residue chain is SsrA-binding protein (151 aa).

Residues 124 to 151 (GKKLHDKRESEKERDWNRQKSRLLKAHG) are disordered. Residues 129 to 141 (DKRESEKERDWNR) are compositionally biased toward basic and acidic residues. The span at 142–151 (QKSRLLKAHG) shows a compositional bias: basic residues.

It belongs to the SmpB family.

It localises to the cytoplasm. In terms of biological role, required for rescue of stalled ribosomes mediated by trans-translation. Binds to transfer-messenger RNA (tmRNA), required for stable association of tmRNA with ribosomes. tmRNA and SmpB together mimic tRNA shape, replacing the anticodon stem-loop with SmpB. tmRNA is encoded by the ssrA gene; the 2 termini fold to resemble tRNA(Ala) and it encodes a 'tag peptide', a short internal open reading frame. During trans-translation Ala-aminoacylated tmRNA acts like a tRNA, entering the A-site of stalled ribosomes, displacing the stalled mRNA. The ribosome then switches to translate the ORF on the tmRNA; the nascent peptide is terminated with the 'tag peptide' encoded by the tmRNA and targeted for degradation. The ribosome is freed to recommence translation, which seems to be the essential function of trans-translation. The chain is SsrA-binding protein from Rhizobium johnstonii (strain DSM 114642 / LMG 32736 / 3841) (Rhizobium leguminosarum bv. viciae).